The following is a 343-amino-acid chain: NADP-dependent alkenal double bond reductase P2 (343 aa).

Positions 52 and 79 each coordinate substrate. NADP(+) contacts are provided by residues 164-167 (GAVG), K190, Y206, N230, 252-258 (CGMISQY), 282-284 (FVV), and N332.

This sequence belongs to the NADP-dependent oxidoreductase L4BD family. Homodimer.

It catalyses the reaction an n-alkanal + NAD(+) = an alk-2-enal + NADH + H(+). It carries out the reaction an n-alkanal + NADP(+) = an alk-2-enal + NADPH + H(+). Catalyzes the reduction of the 7-8 double bond of phenylpropanal substrates, such as p-coumaryl aldehyde and coniferyl aldehyde (in vitro). Has activity towards toxic substrates, such as 4-hydroxy-(2E)-nonenal (in vitro). May play a distinct role in plant antioxidant defense and is possibly involved in NAD(P)/NAD(P)h homeostasis. This is NADP-dependent alkenal double bond reductase P2 (P2) from Arabidopsis thaliana (Mouse-ear cress).